The primary structure comprises 361 residues: Homocitrate synthase (361 aa).

Residues 1-251 form the Pyruvate carboxyltransferase domain; the sequence is MVLDSTLREG…KYRLDLLYRV (251 aa). Residue Arg-8 coordinates 2-oxoglutarate. Glu-9 contacts Mg(2+). 2-oxoglutarate contacts are provided by His-68, Arg-128, and Thr-162. Mg(2+) is bound by residues His-188 and His-190. Residue His-282 is the Proton acceptor of the active site.

This sequence belongs to the alpha-IPM synthase/homocitrate synthase family. Homocitrate synthase LYS20/LYS21 subfamily. It depends on Mg(2+) as a cofactor. The cofactor is Mn(2+).

It carries out the reaction acetyl-CoA + 2-oxoglutarate + H2O = (2R)-homocitrate + CoA + H(+). It functions in the pathway amino-acid biosynthesis; L-lysine biosynthesis via AAA pathway; L-alpha-aminoadipate from 2-oxoglutarate: step 1/5. In terms of biological role, catalyzes the aldol-type condensation of 2-oxoglutarate with acetyl-CoA to yield homocitrate. Carries out the first step of the alpha-aminoadipate (AAA) lysine biosynthesis pathway. This is Homocitrate synthase from Pyrococcus abyssi (strain GE5 / Orsay).